An 81-amino-acid chain; its full sequence is Cytochrome b559 subunit alpha (81 aa).

A helical membrane pass occupies residues 21–35; the sequence is VIHALTIPALFLAGW. His-23 serves as a coordination point for heme.

It belongs to the PsbE/PsbF family. As to quaternary structure, heterodimer of an alpha subunit and a beta subunit. PSII is composed of 1 copy each of membrane proteins PsbA, PsbB, PsbC, PsbD, PsbE, PsbF, PsbH, PsbI, PsbJ, PsbK, PsbL, PsbM, PsbT, PsbX, PsbY, PsbZ, Psb30/Ycf12, peripheral proteins PsbO, CyanoQ (PsbQ), PsbU, PsbV and a large number of cofactors. It forms dimeric complexes. The cofactor is heme b.

It is found in the cellular thylakoid membrane. This b-type cytochrome is tightly associated with the reaction center of photosystem II (PSII). PSII is a light-driven water:plastoquinone oxidoreductase that uses light energy to abstract electrons from H(2)O, generating O(2) and a proton gradient subsequently used for ATP formation. It consists of a core antenna complex that captures photons, and an electron transfer chain that converts photonic excitation into a charge separation. The protein is Cytochrome b559 subunit alpha of Synechococcus sp. (strain JA-3-3Ab) (Cyanobacteria bacterium Yellowstone A-Prime).